The following is a 102-amino-acid chain: MTLTLGHFLSLGAMLFALSVIGIFLNRKNLIVLLMAIELMLLAVNMNFVAFSHYLGDMHGQVFVFFILTVAAAESAIGLAILVLLFRNKSSIDAEDLNTLKG.

Helical transmembrane passes span 5 to 25 (LGHFLSLGAMLFALSVIGIFL), 31 to 51 (IVLLMAIELMLLAVNMNFVAF), and 62 to 82 (VFVFFILTVAAAESAIGLAIL).

Belongs to the complex I subunit 4L family. As to quaternary structure, NDH-1 is composed of 14 different subunits. Subunits NuoA, H, J, K, L, M, N constitute the membrane sector of the complex.

The protein resides in the cell inner membrane. The enzyme catalyses a quinone + NADH + 5 H(+)(in) = a quinol + NAD(+) + 4 H(+)(out). Functionally, NDH-1 shuttles electrons from NADH, via FMN and iron-sulfur (Fe-S) centers, to quinones in the respiratory chain. The immediate electron acceptor for the enzyme in this species is believed to be ubiquinone. Couples the redox reaction to proton translocation (for every two electrons transferred, four hydrogen ions are translocated across the cytoplasmic membrane), and thus conserves the redox energy in a proton gradient. This is NADH-quinone oxidoreductase subunit K from Paracidovorax citrulli (strain AAC00-1) (Acidovorax citrulli).